The sequence spans 100 residues: Urease subunit gamma (100 aa).

This sequence belongs to the urease gamma subunit family. Heterotrimer of UreA (gamma), UreB (beta) and UreC (alpha) subunits. Three heterotrimers associate to form the active enzyme.

Its subcellular location is the cytoplasm. It catalyses the reaction urea + 2 H2O + H(+) = hydrogencarbonate + 2 NH4(+). It participates in nitrogen metabolism; urea degradation; CO(2) and NH(3) from urea (urease route): step 1/1. The chain is Urease subunit gamma from Limosilactobacillus fermentum (Lactobacillus fermentum).